Consider the following 107-residue polypeptide: Iron-binding protein IscA (107 aa).

Fe cation contacts are provided by C35, C99, and C101.

It belongs to the HesB/IscA family. As to quaternary structure, homodimer; may form tetramers and higher multimers. The cofactor is Fe cation.

Is able to transfer iron-sulfur clusters to apo-ferredoxin. Multiple cycles of [2Fe2S] cluster formation and transfer are observed, suggesting that IscA acts catalytically. Recruits intracellular free iron so as to provide iron for the assembly of transient iron-sulfur cluster in IscU in the presence of IscS, L-cysteine and the thioredoxin reductase system TrxA/TrxB. The protein is Iron-binding protein IscA of Cronobacter sakazakii (strain ATCC BAA-894) (Enterobacter sakazakii).